Here is a 377-residue protein sequence, read N- to C-terminus: NAC domain-containing protein 76 (377 aa).

In terms of domain architecture, NAC spans 10-159 (VPPGFRFHPT…GWVVCRAFKK (150 aa)). A DNA-binding region spans residues 110-165 (IGMRKTLVFYKGRAPNGQKTDWIMHEYRLESDENAPPQEEGWVVCRAFKKKPMTGQ). The interval 312–347 (GVSGFGGHHEEDNNKIGHYNNEESNNKGSVETASST) is disordered. The span at 318–336 (GHHEEDNNKIGHYNNEESN) shows a compositional bias: basic and acidic residues. Over residues 337-347 (NKGSVETASST) the composition is skewed to polar residues.

The protein belongs to the plant vascular related NAC-domain protein family. Interacts with NAC030/VND7. Detected in root protoxylem and metaxylem poles and in vessels of protoxylems, outermost metaxylems, inner metaxylems, shoots and hypocotyls. Expressed in roots, hypocotyls, cotyledons and leaves. Present in developing xylems. Specifically expressed in vessels but not in interfascicular fibers in stems.

The protein resides in the nucleus. Its function is as follows. Transcription activator that binds to the secondary wall NAC binding element (SNBE), 5'-(T/A)NN(C/T)(T/C/G)TNNNNNNNA(A/C)GN(A/C/T)(A/T)-3', in the promoter of target genes. Involved in xylem formation by promoting the expression of secondary wall-associated transcription factors and of genes involved in secondary wall biosynthesis and programmed cell death, genes driven by the secondary wall NAC binding element (SNBE). Triggers thickening of secondary walls. The chain is NAC domain-containing protein 76 from Arabidopsis thaliana (Mouse-ear cress).